The sequence spans 137 residues: uncharacterized protein (137 aa).

This is an uncharacterized protein from Mycobacterium tuberculosis (strain ATCC 25618 / H37Rv).